The primary structure comprises 251 residues: Flagellar L-ring protein (251 aa).

A signal peptide spans 1–17; that stretch reads MIRKLAALIVAAAALQA. Cys-18 is lipidated: N-palmitoyl cysteine. Cys-18 carries the S-diacylglycerol cysteine lipid modification.

It belongs to the FlgH family. The basal body constitutes a major portion of the flagellar organelle and consists of four rings (L,P,S, and M) mounted on a central rod.

The protein localises to the cell outer membrane. Its subcellular location is the bacterial flagellum basal body. Its function is as follows. Assembles around the rod to form the L-ring and probably protects the motor/basal body from shearing forces during rotation. This chain is Flagellar L-ring protein, found in Maricaulis maris (strain MCS10) (Caulobacter maris).